Reading from the N-terminus, the 368-residue chain is tRNA 2-selenouridine synthase (368 aa).

Residues 15 to 138 (FLNQHPIMDV…MRQYLIGVIE (124 aa)) form the Rhodanese domain. The active-site S-selanylcysteine intermediate is cysteine 98.

It belongs to the SelU family. In terms of assembly, monomer.

It catalyses the reaction 5-methylaminomethyl-2-thiouridine(34) in tRNA + selenophosphate + (2E)-geranyl diphosphate + H2O + H(+) = 5-methylaminomethyl-2-selenouridine(34) in tRNA + (2E)-thiogeraniol + phosphate + diphosphate. The catalysed reaction is 5-methylaminomethyl-2-thiouridine(34) in tRNA + (2E)-geranyl diphosphate = 5-methylaminomethyl-S-(2E)-geranyl-thiouridine(34) in tRNA + diphosphate. The enzyme catalyses 5-methylaminomethyl-S-(2E)-geranyl-thiouridine(34) in tRNA + selenophosphate + H(+) = 5-methylaminomethyl-2-(Se-phospho)selenouridine(34) in tRNA + (2E)-thiogeraniol. It carries out the reaction 5-methylaminomethyl-2-(Se-phospho)selenouridine(34) in tRNA + H2O = 5-methylaminomethyl-2-selenouridine(34) in tRNA + phosphate. Its function is as follows. Involved in the post-transcriptional modification of the uridine at the wobble position (U34) of tRNA(Lys), tRNA(Glu) and tRNA(Gln). Catalyzes the conversion of 2-thiouridine (S2U-RNA) to 2-selenouridine (Se2U-RNA). Acts in a two-step process involving geranylation of 2-thiouridine (S2U) to S-geranyl-2-thiouridine (geS2U) and subsequent selenation of the latter derivative to 2-selenouridine (Se2U) in the tRNA chain. The chain is tRNA 2-selenouridine synthase from Shewanella baltica (strain OS185).